The chain runs to 189 residues: RNA-binding protein (189 aa).

The segment at C55–C69 adopts a C4-type zinc-finger fold. Residues F114–K189 are disordered. Positions S158–Y167 are enriched in basic and acidic residues. Positions S168 to D180 are enriched in low complexity.

It belongs to the phytoreovirus RNA-binding protein family.

The protein localises to the host cytoplasm. In terms of biological role, constituent of viral factories. Binds to ssRNA and dsRNA. The polypeptide is RNA-binding protein (Alopecurus aequalis (Barnyard grass)).